Here is a 115-residue protein sequence, read N- to C-terminus: Con-Ins G1c (115 aa).

Positions 1 to 24 are cleaved as a signal peptide; it reads MTTSFYFLLMALGLLLYVCQSSFG. The propeptide occupies 25–29; sequence NQHTR. Residue P34 is modified to 4-hydroxyproline; partial. 3 disulfide bridges follow: C38-C101, C50-C114, and C100-C105. Residue E41 is modified to 4-carboxyglutamate. Positions 53–94 are cleaved as a propeptide — c peptide; that stretch reads KRNDAGKKRGRASPLWQRRGSLSQLKARAKRNGAFHLPRDGR. The residue at position 98 (E98) is a 4-carboxyglutamate. P104 carries the post-translational modification 4-hydroxyproline; partial. E109 is modified (4-carboxyglutamate; partial).

This sequence belongs to the insulin family. Heterodimer of A and B chains; disulfide-linked. Post-translationally, is different from Con-Ins G1a (AC A0A0B5AC95) due to absence of amidation at Cys-114. In terms of tissue distribution, expressed by the venom gland.

The protein localises to the secreted. Its function is as follows. This venom insulin, from a fish-hunting cone snail, facilitates prey capture by rapidly inducing hypoglycemic shock. It is one of the smallest known insulin found in nature and lacks the C-terminal segment of the B chain that, in human insulin, mediates engagement of the insulin receptor (INSR) and assembly of the hormone's hexameric storage form. Despite lacking this segment, it both binds and activates human insulin receptor (long isoform (HIR-B)) with only a 10-fold lower potency. In vivo, intraperitoneal injection of this peptide into zebrafish lowers blood glucose with the same potency than human insulin. In addition, when applied to water, this peptide reduces overall locomotor activity of zebrafish larvae, observed as a significant decrease in the percentage of time spent swimming and movement frequency. This is Con-Ins G1c from Conus geographus (Geography cone).